A 31-amino-acid polypeptide reads, in one-letter code: Kappa-sparatoxin-Hv1c (31 aa).

Cystine bridges form between Cys-2–Cys-16, Cys-9–Cys-21, and Cys-15–Cys-25. Position 31 is a tryptophan amide (Trp-31).

As to expression, expressed by the venom gland.

It is found in the secreted. Its function is as follows. Blocks transient outward voltage-gated potassium channels in rat ventricular myocytes (thus prolonging action-potential duration) and rat Kv4.2/KCNA4 channels expressed in Xenopus oocytes. Is also a weak blocker of calcium channels in rat cerebellar granule cells. This is Kappa-sparatoxin-Hv1c from Heteropoda venatoria (Brown huntsman spider).